We begin with the raw amino-acid sequence, 526 residues long: MPQRFIVVTGGVLSGIGKGIFSASLARILKDSGVNVNILKIDPYLNVDAGTMNPNQHGEVFVTDDGYEADLDLGHYERFLGINVSRKNNITAGQIYYSVIKREREGKYLGSTVQIVPHVTSEIKDRIKTMDGDLLVIEIGGTVGDIEGEVFLEAVRELAFEIGREKFHFVHVTYVPYLRTTNEFKTKPTQQSVQLLRRIGIHPDTIIVRTEMPIDANSLFKVSLFSGVPRNRVINLPDASNVYEVPDVLHSLNLHKLIAKELDIDINDRFNWSYPKSFELLKIGIVGKYLGTDDAYKSIIESIYLSGAQKPIVIDAQELEDMTDEQIKNYLDDFDALIIPGGFGRRGIEGKIKAIKYARENKKPILGICLGMQLMAIEFARNVGKLEGANSTEFDENTPYPVVNMMESQKEVLNLGGTMRLGAQKTQIMKGTLLSRIYDGQEVVYERHRHRYEVDAEAFPQLFKNPGEEGYKLTISARSDFVEAVELDDHPFFVGIQYHPEYKSKVGKPHPIFKWLVKAAGGKIND.

An amidoligase domain region spans residues 1-264 (MPQRFIVVTG…HKLIAKELDI (264 aa)). Position 14 (serine 14) interacts with CTP. Serine 14 is a binding site for UTP. Residues 15–20 (GIGKGI) and aspartate 72 contribute to the ATP site. Mg(2+)-binding residues include aspartate 72 and glutamate 138. CTP is bound by residues 145-147 (DIE), 185-190 (KTKPTQ), and lysine 221. UTP contacts are provided by residues 185–190 (KTKPTQ) and lysine 221. The 245-residue stretch at 282-526 (KIGIVGKYLG…VKAAGGKIND (245 aa)) folds into the Glutamine amidotransferase type-1 domain. Residue glycine 342 coordinates L-glutamine. Cysteine 369 acts as the Nucleophile; for glutamine hydrolysis in catalysis. L-glutamine-binding positions include 370 to 373 (LGMQ), glutamate 393, and arginine 451. Active-site residues include histidine 499 and glutamate 501.

Belongs to the CTP synthase family. Homotetramer.

The catalysed reaction is UTP + L-glutamine + ATP + H2O = CTP + L-glutamate + ADP + phosphate + 2 H(+). It catalyses the reaction L-glutamine + H2O = L-glutamate + NH4(+). The enzyme catalyses UTP + NH4(+) + ATP = CTP + ADP + phosphate + 2 H(+). It functions in the pathway pyrimidine metabolism; CTP biosynthesis via de novo pathway; CTP from UDP: step 2/2. With respect to regulation, allosterically activated by GTP, when glutamine is the substrate; GTP has no effect on the reaction when ammonia is the substrate. The allosteric effector GTP functions by stabilizing the protein conformation that binds the tetrahedral intermediate(s) formed during glutamine hydrolysis. Inhibited by the product CTP, via allosteric rather than competitive inhibition. Catalyzes the ATP-dependent amination of UTP to CTP with either L-glutamine or ammonia as the source of nitrogen. Regulates intracellular CTP levels through interactions with the four ribonucleotide triphosphates. In Thermosipho africanus (strain TCF52B), this protein is CTP synthase.